The sequence spans 769 residues: Intron Large complex component GCFC2 (769 aa).

Disordered regions lie at residues 1–122 and 134–212; these read MALR…PIVE and RKRE…DENQ. 4 positions are modified to phosphoserine: Ser-16, Ser-17, Ser-19, and Ser-85. Thr-86 carries the phosphothreonine modification. Phosphoserine is present on residues Ser-118 and Ser-169. The segment covering 190-201 has biased composition (basic and acidic residues); it reads RMAEETSIRSEE. Over residues 202 to 212 the composition is skewed to acidic residues; sequence SSEESQEDENQ. Ser-203 and Ser-206 each carry phosphoserine. The stretch at 256–308 forms a coiled coil; the sequence is NLEIIKKQLNNRLTLLQESHRSHQREYEKYEQDIKSSKTAIQNLESASDHAQN.

This sequence belongs to the GCF family. As to quaternary structure, found in the Intron Large (IL) complex, a post-mRNA release spliceosomal complex containing the excised intron, U2, U5 and U6 snRNPs, and splicing factors. Interacts with TFIP11 and DHX15.

The protein localises to the nucleus. It is found in the nucleoplasm. Its subcellular location is the nucleolus. Its function is as follows. Involved in pre-mRNA splicing through regulating spliceosome C complex formation. May play a role during late-stage splicing events and turnover of excised introns. In Mus musculus (Mouse), this protein is Intron Large complex component GCFC2 (Gcfc2).